A 637-amino-acid polypeptide reads, in one-letter code: Chaperone protein HtpG (637 aa).

The segment at Met1–Arg335 is a; substrate-binding. The b stretch occupies residues Glu336–Arg559. A c region spans residues Phe560–Asn637.

The protein belongs to the heat shock protein 90 family. As to quaternary structure, homodimer.

The protein resides in the cytoplasm. Molecular chaperone. Has ATPase activity. The polypeptide is Chaperone protein HtpG (Ehrlichia ruminantium (strain Welgevonden)).